Reading from the N-terminus, the 386-residue chain is ATP phosphoribosyltransferase regulatory subunit (386 aa).

This sequence belongs to the class-II aminoacyl-tRNA synthetase family. HisZ subfamily. Heteromultimer composed of HisG and HisZ subunits.

Its subcellular location is the cytoplasm. It functions in the pathway amino-acid biosynthesis; L-histidine biosynthesis; L-histidine from 5-phospho-alpha-D-ribose 1-diphosphate: step 1/9. Its function is as follows. Required for the first step of histidine biosynthesis. May allow the feedback regulation of ATP phosphoribosyltransferase activity by histidine. The protein is ATP phosphoribosyltransferase regulatory subunit of Variovorax paradoxus (strain S110).